The following is a 397-amino-acid chain: Protein EMSY-LIKE 3 (397 aa).

The disordered stretch occupies residues 1 to 40; sequence MDYRPSDSSGTDDDLPPSHQGRYQRNARPTGNGRPSVLNS. Residues 50 to 137 enclose the ENT domain; the sequence is METQIHLIEQ…PQLVHDAPSP (88 aa). Positions 81-107 form a coiled coil; that stretch reads ESLITELRKELRVSDEEHRELLSRVNA. Disordered regions lie at residues 122-221 and 284-330; these read SLQS…SYDP and DPGI…TQNG. Over residues 164 to 174 the composition is skewed to polar residues; sequence LHPSMQPSSSA. A Nuclear localization signal motif is present at residues 175-182; that stretch reads LRRGGPPP. Positions 363–389 form a coiled coil; that stretch reads AEVEKAKRVLRDHELALMDAIAKLEEI. Position 390 is a phosphoserine (serine 390).

The protein resides in the nucleus. Functionally, probably involved in the regulation of chromatin states. Contributes to basal immunity. The polypeptide is Protein EMSY-LIKE 3 (Arabidopsis thaliana (Mouse-ear cress)).